An 874-amino-acid chain; its full sequence is Leucine--tRNA ligase (874 aa).

The 'HIGH' region signature appears at 43 to 53; sequence PYPSGRIHIGH. The 'KMSKS' region signature appears at 630-634; that stretch reads KMSKS. Lysine 633 is a binding site for ATP.

This sequence belongs to the class-I aminoacyl-tRNA synthetase family.

Its subcellular location is the cytoplasm. The enzyme catalyses tRNA(Leu) + L-leucine + ATP = L-leucyl-tRNA(Leu) + AMP + diphosphate. This is Leucine--tRNA ligase from Bradyrhizobium sp. (strain ORS 278).